Reading from the N-terminus, the 75-residue chain is Large ribosomal subunit protein uL29 (75 aa).

This sequence belongs to the universal ribosomal protein uL29 family.

The sequence is that of Large ribosomal subunit protein uL29 from Nostoc punctiforme (strain ATCC 29133 / PCC 73102).